A 550-amino-acid polypeptide reads, in one-letter code: Chaperonin GroEL (550 aa).

Residues 30–33, Lys-51, 87–91, Gly-415, and Asp-495 each bind ATP; these read TLGP and DGTTT.

The protein belongs to the chaperonin (HSP60) family. As to quaternary structure, forms a cylinder of 14 subunits composed of two heptameric rings stacked back-to-back. Interacts with the co-chaperonin GroES.

It is found in the cytoplasm. It carries out the reaction ATP + H2O + a folded polypeptide = ADP + phosphate + an unfolded polypeptide.. Its function is as follows. Together with its co-chaperonin GroES, plays an essential role in assisting protein folding. The GroEL-GroES system forms a nano-cage that allows encapsulation of the non-native substrate proteins and provides a physical environment optimized to promote and accelerate protein folding. The sequence is that of Chaperonin GroEL from Dechloromonas aromatica (strain RCB).